A 384-amino-acid chain; its full sequence is Succinate--CoA ligase [ADP-forming] subunit beta (384 aa).

Residues 9-242 (KAILAQYKVP…LNEEDPLEVE (234 aa)) form the ATP-grasp domain. ATP-binding positions include K45, 52-54 (GRG), E98, L101, and E106. Positions 197 and 211 each coordinate Mg(2+). Substrate is bound by residues N262 and 319-321 (GIL).

This sequence belongs to the succinate/malate CoA ligase beta subunit family. Heterotetramer of two alpha and two beta subunits. Requires Mg(2+) as cofactor.

The catalysed reaction is succinate + ATP + CoA = succinyl-CoA + ADP + phosphate. It catalyses the reaction GTP + succinate + CoA = succinyl-CoA + GDP + phosphate. It functions in the pathway carbohydrate metabolism; tricarboxylic acid cycle; succinate from succinyl-CoA (ligase route): step 1/1. In terms of biological role, succinyl-CoA synthetase functions in the citric acid cycle (TCA), coupling the hydrolysis of succinyl-CoA to the synthesis of either ATP or GTP and thus represents the only step of substrate-level phosphorylation in the TCA. The beta subunit provides nucleotide specificity of the enzyme and binds the substrate succinate, while the binding sites for coenzyme A and phosphate are found in the alpha subunit. In Solibacter usitatus (strain Ellin6076), this protein is Succinate--CoA ligase [ADP-forming] subunit beta.